The primary structure comprises 201 residues: Protein S40-5 (201 aa).

Disordered stretches follow at residues 1-39 (MARG…LTEE) and 134-178 (SIHE…EGVG). Residues 17–29 (GSSYSYGDSNGNS) are compositionally biased toward low complexity.

It belongs to the senescence regulator S40 family.

It localises to the cytoplasm. This is Protein S40-5 from Arabidopsis thaliana (Mouse-ear cress).